A 271-amino-acid polypeptide reads, in one-letter code: Sec-independent protein translocase protein TatC (271 aa).

Transmembrane regions (helical) follow at residues 35–55, 93–113, 124–144, 178–198, 213–233, and 234–254; these read IIWT…WHEQ, AFIA…WLFI, YVLP…VFGY, IILG…LALM, SILV…IMNM, and CVFA…AFLV.

It belongs to the TatC family. In terms of assembly, forms a complex with TatA.

The protein localises to the cell inner membrane. Functionally, part of the twin-arginine translocation (Tat) system that transports large folded proteins containing a characteristic twin-arginine motif in their signal peptide across membranes. The sequence is that of Sec-independent protein translocase protein TatC from Koribacter versatilis (strain Ellin345).